Consider the following 318-residue polypeptide: Na(+)-translocating ferredoxin:NAD(+) oxidoreductase complex subunit D (318 aa).

3 helical membrane passes run L35–I55, W77–G99, and F114–A134. T156 bears the FMN phosphoryl threonine mark. The next 3 helical transmembrane spans lie at V182–I202, I206–V226, and I261–P281.

This sequence belongs to the NqrB/RnfD family. As to quaternary structure, the complex is composed of six subunits: RnfA, RnfB, RnfC, RnfD, RnfE and RnfG. FMN serves as cofactor.

It is found in the cell membrane. The enzyme catalyses 2 reduced [2Fe-2S]-[ferredoxin] + Na(+)(in) + NAD(+) + H(+) = 2 oxidized [2Fe-2S]-[ferredoxin] + Na(+)(out) + NADH. In terms of biological role, part of a membrane-bound complex that couples electron transfer with translocation of ions across the membrane. Couples electron transfer from reduced ferredoxin to NAD(+) with electrogenic movement of Na(+) out of the cell. Involved in caffeate respiration. This chain is Na(+)-translocating ferredoxin:NAD(+) oxidoreductase complex subunit D, found in Acetobacterium woodii (strain ATCC 29683 / DSM 1030 / JCM 2381 / KCTC 1655 / WB1).